The primary structure comprises 321 residues: XylDLEGF operon transcriptional activator 1 (321 aa).

Residues 214–315 (ERVVQFIEEN…GELPSDTLRQ (102 aa)) enclose the HTH araC/xylS-type domain. 2 consecutive DNA-binding regions (H-T-H motif) follow at residues 231–252 (ERLAELAMMSPRSLYNLFEKHA) and 282–305 (ITEIALDYGFLHLGRFAENYRSAF).

It localises to the cytoplasm. Functionally, regulatory protein of the TOL plasmid xyl operons. XylS activates the xylXYZLTEGFJQKIH operon required for the degradation of toluene, m-xylene and p-xylene. This chain is XylDLEGF operon transcriptional activator 1 (xylS1), found in Pseudomonas putida (Arthrobacter siderocapsulatus).